Here is a 108-residue protein sequence, read N- to C-terminus: Heme oxygenase (staphylobilin-producing) 2 (108 aa).

An ABM domain is found at 2-93 (FMAENRLQLQ…DDDGQQSPIL (92 aa)). Fe cation is bound at residue Asn-6. Heme-binding positions include 21 to 28 (RFYNRQGI) and His-76.

It belongs to the antibiotic biosynthesis monooxygenase family. Heme-degrading monooxygenase IsdG subfamily. Homodimer.

It localises to the cytoplasm. The enzyme catalyses heme b + 5 AH2 + 4 O2 + 2 H(+) = delta-staphylobilin + Fe(2+) + formaldehyde + 5 A + 4 H2O. It catalyses the reaction heme b + 5 AH2 + 4 O2 + 2 H(+) = beta-staphylobilin + Fe(2+) + formaldehyde + 5 A + 4 H2O. Functionally, allows bacterial pathogens to use the host heme as an iron source. Catalyzes the oxidative degradation of the heme macrocyclic porphyrin ring to the oxo-bilirubin chromophore staphylobilin (a mixture of the linear tetrapyrroles 5-oxo-delta-bilirubin and 15-oxo-beta-bilirubin) in the presence of a suitable electron donor such as ascorbate or NADPH--cytochrome P450 reductase, with subsequent release of free iron. This Staphylococcus aureus (strain MRSA252) protein is Heme oxygenase (staphylobilin-producing) 2 (isdI).